The sequence spans 204 residues: Recombination protein RecR (204 aa).

The C4-type zinc finger occupies 63–78; sequence CRRCFNITVGELCAIC. Residues 86–181 enclose the Toprim domain; that stretch reads TKICVVEEPL…RVTRPARGLP (96 aa).

The protein belongs to the RecR family.

In terms of biological role, may play a role in DNA repair. It seems to be involved in an RecBC-independent recombinational process of DNA repair. It may act with RecF and RecO. The polypeptide is Recombination protein RecR (Chloroflexus aurantiacus (strain ATCC 29366 / DSM 635 / J-10-fl)).